Here is a 163-residue protein sequence, read N- to C-terminus: Large ribosomal subunit protein uL10 (163 aa).

It belongs to the universal ribosomal protein uL10 family. In terms of assembly, part of the ribosomal stalk of the 50S ribosomal subunit. The N-terminus interacts with L11 and the large rRNA to form the base of the stalk. The C-terminus forms an elongated spine to which L12 dimers bind in a sequential fashion forming a multimeric L10(L12)X complex.

Functionally, forms part of the ribosomal stalk, playing a central role in the interaction of the ribosome with GTP-bound translation factors. The sequence is that of Large ribosomal subunit protein uL10 from Actinobacillus pleuropneumoniae serotype 5b (strain L20).